A 338-amino-acid chain; its full sequence is tRNA N6-adenosine threonylcarbamoyltransferase (338 aa).

2 residues coordinate Fe cation: histidine 111 and histidine 115. Substrate-binding positions include 134–138 (LVSGG), aspartate 167, glycine 180, and asparagine 272. Aspartate 300 provides a ligand contact to Fe cation.

It belongs to the KAE1 / TsaD family. Fe(2+) serves as cofactor.

Its subcellular location is the cytoplasm. It carries out the reaction L-threonylcarbamoyladenylate + adenosine(37) in tRNA = N(6)-L-threonylcarbamoyladenosine(37) in tRNA + AMP + H(+). Functionally, required for the formation of a threonylcarbamoyl group on adenosine at position 37 (t(6)A37) in tRNAs that read codons beginning with adenine. Is involved in the transfer of the threonylcarbamoyl moiety of threonylcarbamoyl-AMP (TC-AMP) to the N6 group of A37, together with TsaE and TsaB. TsaD likely plays a direct catalytic role in this reaction. This chain is tRNA N6-adenosine threonylcarbamoyltransferase, found in Aliivibrio fischeri (strain MJ11) (Vibrio fischeri).